The chain runs to 205 residues: Holliday junction branch migration complex subunit RuvA (205 aa).

Residues 1–67 (MIGWLKGDVQ…ADNLQLFGFL (67 aa)) form a domain I region. The segment at 68 to 146 (QLAERDLFRE…DSVASTGPER (79 aa)) is domain II. Positions 147 to 155 (NQLDPVAPD) are flexible linker. Residues 155–205 (DLIATLETLGFETHEIRDALQRLNGMGGPQDGDDDDAWLRACIKLMSSTDP) form a domain III region.

This sequence belongs to the RuvA family. As to quaternary structure, homotetramer. Forms an RuvA(8)-RuvB(12)-Holliday junction (HJ) complex. HJ DNA is sandwiched between 2 RuvA tetramers; dsDNA enters through RuvA and exits via RuvB. An RuvB hexamer assembles on each DNA strand where it exits the tetramer. Each RuvB hexamer is contacted by two RuvA subunits (via domain III) on 2 adjacent RuvB subunits; this complex drives branch migration. In the full resolvosome a probable DNA-RuvA(4)-RuvB(12)-RuvC(2) complex forms which resolves the HJ.

The protein localises to the cytoplasm. In terms of biological role, the RuvA-RuvB-RuvC complex processes Holliday junction (HJ) DNA during genetic recombination and DNA repair, while the RuvA-RuvB complex plays an important role in the rescue of blocked DNA replication forks via replication fork reversal (RFR). RuvA specifically binds to HJ cruciform DNA, conferring on it an open structure. The RuvB hexamer acts as an ATP-dependent pump, pulling dsDNA into and through the RuvAB complex. HJ branch migration allows RuvC to scan DNA until it finds its consensus sequence, where it cleaves and resolves the cruciform DNA. This is Holliday junction branch migration complex subunit RuvA from Parasynechococcus marenigrum (strain WH8102).